A 378-amino-acid chain; its full sequence is Spermidine/putrescine import ATP-binding protein PotA (378 aa).

Positions 18-248 (VLLSGISKSF…PKNLFVAGFI (231 aa)) constitute an ABC transporter domain. 50–57 (GPSGCGKT) provides a ligand contact to ATP.

This sequence belongs to the ABC transporter superfamily. Spermidine/putrescine importer (TC 3.A.1.11.1) family. The complex is composed of two ATP-binding proteins (PotA), two transmembrane proteins (PotB and PotC) and a solute-binding protein (PotD).

The protein resides in the cell inner membrane. It catalyses the reaction ATP + H2O + polyamine-[polyamine-binding protein]Side 1 = ADP + phosphate + polyamineSide 2 + [polyamine-binding protein]Side 1.. Part of the ABC transporter complex PotABCD involved in spermidine/putrescine import. Responsible for energy coupling to the transport system. The polypeptide is Spermidine/putrescine import ATP-binding protein PotA (Salmonella typhi).